Reading from the N-terminus, the 177-residue chain is N-acetylmuramoyl-L-alanine amidase A (177 aa).

One can recognise an N-acetylmuramoyl-L-alanine amidase domain in the interval glutamine 23–glycine 158. The cysteines at positions 114 and 121 are disulfide-linked.

The protein resides in the secreted. The catalysed reaction is Hydrolyzes the link between N-acetylmuramoyl residues and L-amino acid residues in certain cell-wall glycopeptides.. Antibacterial activity against Gram-positive bacteria M.luteus, S.aureus, E.faecalis and P.acidilactici and Gram-negative bacterium E.coli. The sequence is that of N-acetylmuramoyl-L-alanine amidase A (cwhA) from Achromobacter lyticus.